Reading from the N-terminus, the 168-residue chain is N-alpha-acetyltransferase 50 (168 aa).

Residues 5–154 (IELGDVTPHN…DAHVLQKSLR (150 aa)) form the N-acetyltransferase domain. Y30 lines the substrate pocket. Y72 is an active-site residue. M74 contributes to the substrate binding site. Residue 76-89 (LGCLAPYRRLGIGT) participates in acetyl-CoA binding. The active site involves H111. 116 to 125 (NESAIDFYQK) lines the CoA pocket. Positions 137–140 (YYKR) are substrate.

Belongs to the acetyltransferase family. GNAT subfamily. Interacts with naa35.

Its subcellular location is the cytoplasm. The protein localises to the nucleus. The catalysed reaction is N-terminal L-methionyl-L-alanyl-[protein] + acetyl-CoA = N-terminal N(alpha)-acetyl-L-methionyl-L-alanyl-[protein] + CoA + H(+). The enzyme catalyses N-terminal L-methionyl-L-seryl-[protein] + acetyl-CoA = N-terminal N(alpha)-acetyl-L-methionyl-L-seryl-[protein] + CoA + H(+). It catalyses the reaction N-terminal L-methionyl-L-valyl-[protein] + acetyl-CoA = N-terminal N(alpha)-acetyl-L-methionyl-L-valyl-[protein] + CoA + H(+). It carries out the reaction N-terminal L-methionyl-L-threonyl-[protein] + acetyl-CoA = N-terminal N(alpha)-acetyl-L-methionyl-L-threonyl-[protein] + CoA + H(+). The catalysed reaction is N-terminal L-methionyl-L-lysyl-[protein] + acetyl-CoA = N-terminal N(alpha)-acetyl-L-methionyl-L-lysyl-[protein] + CoA + H(+). The enzyme catalyses N-terminal L-methionyl-L-leucyl-[protein] + acetyl-CoA = N-terminal N(alpha)-acetyl-L-methionyl-L-leucyl-[protein] + CoA + H(+). It catalyses the reaction N-terminal L-methionyl-L-phenylalanyl-[protein] + acetyl-CoA = N-terminal N(alpha)-acetyl-L-methionyl-L-phenylalanyl-[protein] + CoA + H(+). It carries out the reaction N-terminal L-methionyl-L-tyrosyl-[protein] + acetyl-CoA = N-terminal N(alpha)-acetyl-L-methionyl-L-tyrosyl-[protein] + CoA + H(+). N-alpha-acetyltransferase that acetylates the N-terminus of proteins that retain their initiating methionine. Has a broad substrate specificity: able to acetylate the initiator methionine of most peptides, except for those with a proline in second position. Also displays N-epsilon-acetyltransferase activity by mediating acetylation of the side chain of specific lysines on proteins. The relevance of N-epsilon-acetyltransferase activity is however unclear. Required for sister chromatid cohesion during mitosis by promoting binding of CDCA5/sororin to cohesin. Essential in embryonic cell proliferation and survival. The sequence is that of N-alpha-acetyltransferase 50 (naa50) from Danio rerio (Zebrafish).